A 241-amino-acid polypeptide reads, in one-letter code: DnaA regulatory inactivator Hda (241 aa).

Belongs to the DnaA family. HdA subfamily. As to quaternary structure, the active form seems to be an ADP-bound monomer. Forms the RIDA complex (regulatory inactivation of DnaA) of ATP-DnaA, ADP-Hda and the DNA-loaded beta sliding clamp (dnaN).

Its function is as follows. Mediates the interaction of DNA replication initiator protein DnaA with DNA polymerase subunit beta sliding clamp (dnaN). Stimulates hydrolysis of ATP-DnaA to ADP-DnaA, rendering DnaA inactive for reinitiation, a process called regulatory inhibition of DnaA or RIDA. The protein is DnaA regulatory inactivator Hda of Salmonella paratyphi A (strain ATCC 9150 / SARB42).